We begin with the raw amino-acid sequence, 171 residues long: Shikimate kinase (171 aa).

An ATP-binding site is contributed by Gly13 to Thr18. Ser17 is a binding site for Mg(2+). 3 residues coordinate substrate: Asp35, Arg59, and Gly81. Position 118 (Arg118) interacts with ATP. Arg136 is a substrate binding site. ATP is bound at residue Arg153.

Belongs to the shikimate kinase family. As to quaternary structure, monomer. Mg(2+) is required as a cofactor.

It localises to the cytoplasm. The enzyme catalyses shikimate + ATP = 3-phosphoshikimate + ADP + H(+). It functions in the pathway metabolic intermediate biosynthesis; chorismate biosynthesis; chorismate from D-erythrose 4-phosphate and phosphoenolpyruvate: step 5/7. Catalyzes the specific phosphorylation of the 3-hydroxyl group of shikimic acid using ATP as a cosubstrate. The protein is Shikimate kinase of Streptomyces coelicolor (strain ATCC BAA-471 / A3(2) / M145).